A 269-amino-acid chain; its full sequence is MEKIKIIVASDSIGETAELVARAGISQFNPKQCKNELLRYPYIESFEDVDEVIQVAKDTNAIIVYTLIKPEMKQYMSEKVAEFQLKSVDIMGPLMDLLSASVEEKPYNEPGIVHRLDDAYFKKIDAIEFAVKYDDGKDPKGLPKADIVLLGISRTSKTPLSQYLAHKSYKVMNVPIVPEVTPPDGLYDIDPKKCIALKISEEKLNRIRKERLKQLGLGDTARYATDQEELNYFEEIVSEIGCPVIDVSQKAIEETANDIIHYIEQNKSK.

ADP is bound at residue Gly-151–Thr-158.

The protein belongs to the pyruvate, phosphate/water dikinase regulatory protein family. PDRP subfamily.

The enzyme catalyses N(tele)-phospho-L-histidyl/L-threonyl-[pyruvate, phosphate dikinase] + ADP = N(tele)-phospho-L-histidyl/O-phospho-L-threonyl-[pyruvate, phosphate dikinase] + AMP + H(+). It catalyses the reaction N(tele)-phospho-L-histidyl/O-phospho-L-threonyl-[pyruvate, phosphate dikinase] + phosphate + H(+) = N(tele)-phospho-L-histidyl/L-threonyl-[pyruvate, phosphate dikinase] + diphosphate. Functionally, bifunctional serine/threonine kinase and phosphorylase involved in the regulation of the pyruvate, phosphate dikinase (PPDK) by catalyzing its phosphorylation/dephosphorylation. This Staphylococcus aureus protein is Putative pyruvate, phosphate dikinase regulatory protein.